Consider the following 468-residue polypeptide: Glutamate--tRNA ligase 2 (468 aa).

The 'HIGH' region signature appears at 9–19 (PSPTGSLHLGG). Residues 238–242 (KLSKR) carry the 'KMSKS' region motif. An ATP-binding site is contributed by Lys241.

Belongs to the class-I aminoacyl-tRNA synthetase family. Glutamate--tRNA ligase type 1 subfamily. Monomer.

Its subcellular location is the cytoplasm. It carries out the reaction tRNA(Glu) + L-glutamate + ATP = L-glutamyl-tRNA(Glu) + AMP + diphosphate. Functionally, catalyzes the attachment of glutamate to tRNA(Glu) in a two-step reaction: glutamate is first activated by ATP to form Glu-AMP and then transferred to the acceptor end of tRNA(Glu). The polypeptide is Glutamate--tRNA ligase 2 (Anaplasma phagocytophilum (strain HZ)).